The chain runs to 206 residues: LexA repressor (206 aa).

The H-T-H motif DNA-binding region spans 28-48; sequence VREIGEAVGLASSSTVHGHLD. Active-site for autocatalytic cleavage activity residues include Ser-128 and Lys-166.

It belongs to the peptidase S24 family. In terms of assembly, homodimer.

It catalyses the reaction Hydrolysis of Ala-|-Gly bond in repressor LexA.. Functionally, represses a number of genes involved in the response to DNA damage (SOS response), including recA and lexA. In the presence of single-stranded DNA, RecA interacts with LexA causing an autocatalytic cleavage which disrupts the DNA-binding part of LexA, leading to derepression of the SOS regulon and eventually DNA repair. This is LexA repressor from Exiguobacterium sp. (strain ATCC BAA-1283 / AT1b).